The primary structure comprises 287 residues: 4-hydroxybenzoate octaprenyltransferase (287 aa).

The next 9 helical transmembrane spans lie at 22 to 42 (IGTL…AQGF), 45 to 65 (LGVL…GCVI), 91 to 111 (TSTE…LLVL), 114 to 134 (NSLT…YPFM), 139 to 159 (QLPQ…AFAA), 161 to 181 (ANAL…WTIA), 212 to 232 (IIIA…GWLE), 236 to 256 (WIYF…QLQI), and 267 to 287 (AFLD…LGYL).

It belongs to the UbiA prenyltransferase family. Requires Mg(2+) as cofactor.

It localises to the cell inner membrane. The enzyme catalyses all-trans-octaprenyl diphosphate + 4-hydroxybenzoate = 4-hydroxy-3-(all-trans-octaprenyl)benzoate + diphosphate. It functions in the pathway cofactor biosynthesis; ubiquinone biosynthesis. Its function is as follows. Catalyzes the prenylation of para-hydroxybenzoate (PHB) with an all-trans polyprenyl group. Mediates the second step in the final reaction sequence of ubiquinone-8 (UQ-8) biosynthesis, which is the condensation of the polyisoprenoid side chain with PHB, generating the first membrane-bound Q intermediate 3-octaprenyl-4-hydroxybenzoate. The protein is 4-hydroxybenzoate octaprenyltransferase of Psychromonas ingrahamii (strain DSM 17664 / CCUG 51855 / 37).